The sequence spans 112 residues: Urease subunit beta (112 aa).

This sequence belongs to the urease beta subunit family. Heterotrimer of UreA (gamma), UreB (beta) and UreC (alpha) subunits. Three heterotrimers associate to form the active enzyme.

Its subcellular location is the cytoplasm. The catalysed reaction is urea + 2 H2O + H(+) = hydrogencarbonate + 2 NH4(+). Its pathway is nitrogen metabolism; urea degradation; CO(2) and NH(3) from urea (urease route): step 1/1. The polypeptide is Urease subunit beta (Polaromonas sp. (strain JS666 / ATCC BAA-500)).